The sequence spans 499 residues: NAD(P)H-quinone oxidoreductase chain 4, chloroplastic (499 aa).

14 helical membrane-spanning segments follow: residues 4 to 24 (FPWLTLIVVFPIAAGSLIFFL), 35 to 55 (YTIYICVLELLLTTYAFCYNF), 84 to 104 (GLSIGPILLTGFITTLATLAA), 111 to 129 (SRLFHFLMLAMYSGQIGSF), 134 to 154 (LLLFFIMWELELIPVYLLLSV), 167 to 187 (FILYTAGGSVFLLIGVLGIGL), 208 to 228 (ALEIIFYIGFFIAFAVKLPII), 242 to 262 (HYSTCMLLAGILLKMGAYGLI), 272 to 292 (AHSIFSPWFMIVGTVQIIYAA), 305 to 325 (IAYSSVSHMGFIILGIGSITD), 330 to 350 (GAVLQIISHGLISAALFFLAG), 386 to 406 (LALPGMSGFVAELIVFFGIIT), 416 to 436 (IVITFVMAIGMILTPIYSLSM), and 462 to 482 (LFVLISILLPVIGIGIYPDFV).

This sequence belongs to the complex I subunit 4 family.

The protein resides in the plastid. It is found in the chloroplast thylakoid membrane. The enzyme catalyses a plastoquinone + NADH + (n+1) H(+)(in) = a plastoquinol + NAD(+) + n H(+)(out). The catalysed reaction is a plastoquinone + NADPH + (n+1) H(+)(in) = a plastoquinol + NADP(+) + n H(+)(out). The chain is NAD(P)H-quinone oxidoreductase chain 4, chloroplastic from Citrus sinensis (Sweet orange).